The following is a 199-amino-acid chain: Tumor necrosis factor ligand superfamily member 4 (199 aa).

At 1 to 25 (MEGEGVQPPDENLENGSRPRFKWKK) the chain is on the cytoplasmic side. The chain crosses the membrane as a helical; Signal-anchor for type II membrane protein span at residues 26 to 48 (VLRLVVSGIKAAGLLLCVVYVCL). The Extracellular portion of the chain corresponds to 49–199 (QFSSSPAKDS…YSSTVNQVPL (151 aa)). Positions 59 to 176 (PIQRLRAPVT…QINDGELIIV (118 aa)) constitute a THD domain. 2 disulfide bridges follow: Cys-70–Cys-163 and Cys-98–Cys-184. 2 N-linked (GlcNAc...) asparagine glycosylation sites follow: Asn-91 and Asn-157.

It belongs to the tumor necrosis factor family. Homotrimer. In terms of tissue distribution, detected in T-cell lines, but not in a macrophage cell line.

It localises to the membrane. In terms of biological role, cytokine that binds to TNFRSF4. Co-stimulates T-cell proliferation and cytokine production. This Rattus norvegicus (Rat) protein is Tumor necrosis factor ligand superfamily member 4 (Tnfsf4).